We begin with the raw amino-acid sequence, 459 residues long: Chromosomal replication initiator protein DnaA (459 aa).

The interval 1-74 (MMEMPIDNLW…ANVVQSILGH (74 aa)) is domain I, interacts with DnaA modulators. A domain II region spans residues 74 to 117 (HPVEIYITVAKGEEFEEIGGGGEWELPTTNIINETPNQNRQPNT). Residues 118 to 334 (ELNAKYVFSR…GALTRALAYI (217 aa)) form a domain III, AAA+ region region. Residues Gly-162, Gly-164, Lys-165, and Thr-166 each coordinate ATP. The domain IV, binds dsDNA stretch occupies residues 335–459 (SIWGLPMTVA…IKMNSRSRKP (125 aa)).

This sequence belongs to the DnaA family. Oligomerizes as a right-handed, spiral filament on DNA at oriC.

It is found in the cytoplasm. Its function is as follows. Plays an essential role in the initiation and regulation of chromosomal replication. ATP-DnaA binds to the origin of replication (oriC) to initiate formation of the DNA replication initiation complex once per cell cycle. Binds the DnaA box (a 9 base pair repeat at the origin) and separates the double-stranded (ds)DNA. Forms a right-handed helical filament on oriC DNA; dsDNA binds to the exterior of the filament while single-stranded (ss)DNA is stabiized in the filament's interior. The ATP-DnaA-oriC complex binds and stabilizes one strand of the AT-rich DNA unwinding element (DUE), permitting loading of DNA polymerase. After initiation quickly degrades to an ADP-DnaA complex that is not apt for DNA replication. Binds acidic phospholipids. In Nostoc sp. (strain PCC 7120 / SAG 25.82 / UTEX 2576), this protein is Chromosomal replication initiator protein DnaA.